The following is an 81-amino-acid chain: Small ribosomal subunit protein bS18 (81 aa).

This sequence belongs to the bacterial ribosomal protein bS18 family. In terms of assembly, part of the 30S ribosomal subunit. Forms a tight heterodimer with protein bS6.

Binds as a heterodimer with protein bS6 to the central domain of the 16S rRNA, where it helps stabilize the platform of the 30S subunit. This chain is Small ribosomal subunit protein bS18, found in Lactococcus lactis subsp. cremoris (strain MG1363).